The chain runs to 482 residues: Ubiquitin carboxyl-terminal hydrolase MINDY-1 (482 aa).

Positions 1–119 are disordered; that stretch reads MEQPQAECPA…RPQQLPQSPR (119 aa). The segment covering 21-66 has biased composition (basic and acidic residues); that stretch reads ESEKHEALSGPEKHPQDKDGADAAPEKHPQDKDGADAHGEAGKQKS. Residues 82 to 94 are compositionally biased toward pro residues; sequence CPPPEASSSPPGP. Over residues 106–119 the composition is skewed to polar residues; sequence EACSRPQQLPQSPR. S117 is subject to Phosphoserine. The active-site Nucleophile is C151. H333 acts as the Proton acceptor in catalysis. The segment at 402–441 is ubiquitin-binding domain (UBD); that stretch reads QVDQDYLIALSLQQQQQPQGMLGLSDLELAQQLQQEEYQQ. Residues 437–446 are compositionally biased toward low complexity; sequence EEYQQQQAVQ. Residues 437-482 are disordered; sequence EEYQQQQAVQPVRTRAPSSPGRGATSGRPAGERRQRSKTESDCVLL. S454 is modified (phosphoserine). Residues 466 to 482 show a composition bias toward basic and acidic residues; the sequence is AGERRQRSKTESDCVLL.

This sequence belongs to the MINDY deubiquitinase family. FAM63 subfamily.

The catalysed reaction is Thiol-dependent hydrolysis of ester, thioester, amide, peptide and isopeptide bonds formed by the C-terminal Gly of ubiquitin (a 76-residue protein attached to proteins as an intracellular targeting signal).. In terms of biological role, hydrolase that can specifically remove 'Lys-48'-linked conjugated ubiquitin from proteins. Has exodeubiquitinase activity and has a preference for long polyubiquitin chains. May play a regulatory role at the level of protein turnover. This is Ubiquitin carboxyl-terminal hydrolase MINDY-1 (Mindy1) from Rattus norvegicus (Rat).